The following is a 275-amino-acid chain: NH(3)-dependent NAD(+) synthetase (275 aa).

Residue 46–53 participates in ATP binding; sequence GISGGQDS. Residue D52 participates in Mg(2+) binding. R140 is a deamido-NAD(+) binding site. Position 160 (T160) interacts with ATP. E165 contacts Mg(2+). Deamido-NAD(+) contacts are provided by K173 and D180. Positions 189 and 211 each coordinate ATP. 260–261 provides a ligand contact to deamido-NAD(+); the sequence is HK.

It belongs to the NAD synthetase family. In terms of assembly, homodimer.

It catalyses the reaction deamido-NAD(+) + NH4(+) + ATP = AMP + diphosphate + NAD(+) + H(+). Its pathway is cofactor biosynthesis; NAD(+) biosynthesis; NAD(+) from deamido-NAD(+) (ammonia route): step 1/1. Functionally, catalyzes the ATP-dependent amidation of deamido-NAD to form NAD. Uses ammonia as a nitrogen source. This is NH(3)-dependent NAD(+) synthetase from Escherichia coli O157:H7.